Here is a 477-residue protein sequence, read N- to C-terminus: Bifunctional protein HldE (477 aa).

The tract at residues 1–318 is ribokinase; that stretch reads MKVTLPEFER…ENAVRGRADT (318 aa). At lysine 179 the chain carries N6-acetyllysine. Position 195-198 (195-198) interacts with ATP; sequence NLSE. Residue aspartate 264 is part of the active site. The segment at 344-477 is cytidylyltransferase; it reads MTNGVFDILH…IKKIQQDKKG (134 aa).

The protein in the N-terminal section; belongs to the carbohydrate kinase PfkB family. It in the C-terminal section; belongs to the cytidylyltransferase family. In terms of assembly, homodimer.

It carries out the reaction D-glycero-beta-D-manno-heptose 7-phosphate + ATP = D-glycero-beta-D-manno-heptose 1,7-bisphosphate + ADP + H(+). The catalysed reaction is D-glycero-beta-D-manno-heptose 1-phosphate + ATP + H(+) = ADP-D-glycero-beta-D-manno-heptose + diphosphate. Its pathway is nucleotide-sugar biosynthesis; ADP-L-glycero-beta-D-manno-heptose biosynthesis; ADP-L-glycero-beta-D-manno-heptose from D-glycero-beta-D-manno-heptose 7-phosphate: step 1/4. The protein operates within nucleotide-sugar biosynthesis; ADP-L-glycero-beta-D-manno-heptose biosynthesis; ADP-L-glycero-beta-D-manno-heptose from D-glycero-beta-D-manno-heptose 7-phosphate: step 3/4. Functionally, catalyzes the phosphorylation of D-glycero-D-manno-heptose 7-phosphate at the C-1 position to selectively form D-glycero-beta-D-manno-heptose-1,7-bisphosphate. In terms of biological role, catalyzes the ADP transfer from ATP to D-glycero-beta-D-manno-heptose 1-phosphate, yielding ADP-D-glycero-beta-D-manno-heptose. The protein is Bifunctional protein HldE of Shigella sonnei (strain Ss046).